The sequence spans 298 residues: Probable D,D-dipeptide transport system permease protein DdpC (298 aa).

At 1–33 the chain is on the cytoplasmic side; the sequence is MMLSEETSAVRPQKQTRFNGAKLVWMLKGSPLT. Residues 34-54 traverse the membrane as a helical segment; it reads VTSAVIIVLMLLMMIFSPWLA. The Periplasmic segment spans residues 55-96; the sequence is THDPNAIDLTARLLPPSAAHWFGTDEVGRDLFSRVLVGSQQS. A helical membrane pass occupies residues 97–117; it reads ILAGLVVVAIAGMIGSLLGCL. The region spanning 97–282 is the ABC transmembrane type-1 domain; sequence ILAGLVVVAI…LTAVGFNLFG (186 aa). Residues 118–124 lie on the Cytoplasmic side of the membrane; sequence SGVLGGR. The next 2 membrane-spanning stretches (helical) occupy residues 125 to 145 and 146 to 166; these read ADAIIMRIMDIMLSIPSLVLT and MALAAALGPSLFNAMLAIAIV. At 167 to 217 the chain is on the cytoplasmic side; that stretch reads RIPFYVRLARGQALVVRQYTYVQAAKTFGASRWHLINWHILRNSLPPLIVQ. Residues 218–238 form a helical membrane-spanning segment; it reads ASLDIGSAILMAATLGFIGLG. Over 239–260 the chain is Periplasmic; the sequence is AQQPSAEWGAMVANGRNYVLDQ. The helical transmembrane segment at 261–281 threads the bilayer; it reads WWYCAFPGAAILLTAVGFNLF. Over 282 to 298 the chain is Cytoplasmic; sequence GDGIRDLLDPKAGGKQS.

This sequence belongs to the binding-protein-dependent transport system permease family. OppBC subfamily. As to quaternary structure, the complex is composed of two ATP-binding proteins (DdpD and DdpF), two transmembrane proteins (DdpB and DdpC) and a solute-binding protein (DdpA).

The protein resides in the cell inner membrane. Functionally, part of the ABC transporter complex DdpABCDF, which is probably involved in D,D-dipeptide transport. Probably responsible for the translocation of the substrate across the membrane. The sequence is that of Probable D,D-dipeptide transport system permease protein DdpC (ddpC) from Escherichia coli (strain K12).